A 409-amino-acid chain; its full sequence is Dihydrolipoyllysine-residue succinyltransferase component of 2-oxoglutarate dehydrogenase complex (409 aa).

A Lipoyl-binding domain is found at 2-77 (AIEILVPDLP…VSKQLLGKIS (76 aa)). An N6-lipoyllysine modification is found at K43. A compositionally biased stretch (polar residues) spans 83–107 (DVSSATLKATNEPTPSDRQNAAIEN). Positions 83-114 (DVSSATLKATNEPTPSDRQNAAIENSHNHNAD) are disordered. Residues 114 to 151 (DQSPVIRRLLAEHDLQADQIQGSGVGGRLTREDIEREI) form the Peripheral subunit-binding (PSBD) domain. Residues H380 and D384 contribute to the active site.

The protein belongs to the 2-oxoacid dehydrogenase family. In terms of assembly, forms a 24-polypeptide structural core with octahedral symmetry. Part of the 2-oxoglutarate dehydrogenase (OGDH) complex composed of E1 (2-oxoglutarate dehydrogenase), E2 (dihydrolipoamide succinyltransferase) and E3 (dihydrolipoamide dehydrogenase); the complex contains multiple copies of the three enzymatic components (E1, E2 and E3). Requires (R)-lipoate as cofactor.

It catalyses the reaction N(6)-[(R)-dihydrolipoyl]-L-lysyl-[protein] + succinyl-CoA = N(6)-[(R)-S(8)-succinyldihydrolipoyl]-L-lysyl-[protein] + CoA. It functions in the pathway amino-acid degradation; L-lysine degradation via saccharopine pathway; glutaryl-CoA from L-lysine: step 6/6. Its function is as follows. E2 component of the 2-oxoglutarate dehydrogenase (OGDH) complex which catalyzes the second step in the conversion of 2-oxoglutarate to succinyl-CoA and CO(2). This chain is Dihydrolipoyllysine-residue succinyltransferase component of 2-oxoglutarate dehydrogenase complex (sucB), found in Haemophilus influenzae (strain ATCC 51907 / DSM 11121 / KW20 / Rd).